Reading from the N-terminus, the 186-residue chain is Ribosome-recycling factor (186 aa).

Belongs to the RRF family.

It is found in the cytoplasm. Responsible for the release of ribosomes from messenger RNA at the termination of protein biosynthesis. May increase the efficiency of translation by recycling ribosomes from one round of translation to another. This is Ribosome-recycling factor from Rhodopseudomonas palustris (strain ATCC BAA-98 / CGA009).